The sequence spans 286 residues: Pyridoxal kinase PdxY (286 aa).

Substrate contacts are provided by residues S9 and 44–45 (MQ). ATP-binding residues include D111, E147, and K180. D221 contributes to the substrate binding site.

Belongs to the pyridoxine kinase family. PdxY subfamily. In terms of assembly, homodimer. It depends on Mg(2+) as a cofactor.

It carries out the reaction pyridoxal + ATP = pyridoxal 5'-phosphate + ADP + H(+). It participates in cofactor metabolism; pyridoxal 5'-phosphate salvage; pyridoxal 5'-phosphate from pyridoxal: step 1/1. Its function is as follows. Pyridoxal kinase involved in the salvage pathway of pyridoxal 5'-phosphate (PLP). Catalyzes the phosphorylation of pyridoxal to PLP. This Burkholderia lata (strain ATCC 17760 / DSM 23089 / LMG 22485 / NCIMB 9086 / R18194 / 383) protein is Pyridoxal kinase PdxY.